We begin with the raw amino-acid sequence, 43 residues long: Potassium channel toxin gamma-KTx 4.12 (43 aa).

Intrachain disulfides connect Cys-5/Cys-23, Cys-11/Cys-34, Cys-20/Cys-39, and Cys-24/Cys-41.

Expressed by the venom gland.

The protein localises to the secreted. In terms of biological role, reversibly blocks Kv11/ERG potassium channels. Is less toxic than ergtoxin (AC Q86QT3). The polypeptide is Potassium channel toxin gamma-KTx 4.12 (Centruroides sculpturatus (Arizona bark scorpion)).